A 593-amino-acid polypeptide reads, in one-letter code: Histone-arginine methyltransferase CARMER (593 aa).

Residues 122–429 (ASQYFQFYGY…QRQSYDVEMD (308 aa)) form the SAM-dependent MTase PRMT-type domain. S-adenosyl-L-methionine-binding residues include Gln-135, Arg-144, Gly-168, Glu-190, Glu-219, and Thr-247. Arg-482 is modified (asymmetric dimethylarginine; by autocatalysis). Residues 521–540 (LISSTGRQQSQQQTTPAQPL) form a disordered region. A compositionally biased stretch (low complexity) spans 523–535 (SSTGRQQSQQQTT).

It belongs to the class I-like SAM-binding methyltransferase superfamily. Protein arginine N-methyltransferase family. In terms of assembly, homodimer. In terms of processing, the dimethylated protein is the major form.

Its subcellular location is the cytoplasm. It localises to the nucleus. The enzyme catalyses L-arginyl-[protein] + 2 S-adenosyl-L-methionine = N(omega),N(omega)-dimethyl-L-arginyl-[protein] + 2 S-adenosyl-L-homocysteine + 2 H(+). In terms of biological role, methylates (mono- and asymmetric dimethylation) the guanidino nitrogens of arginyl residues in proteins. May methylate histone H3 at 'Arg-17' and activate transcription via chromatin remodeling. The sequence is that of Histone-arginine methyltransferase CARMER from Aedes aegypti (Yellowfever mosquito).